We begin with the raw amino-acid sequence, 88 residues long: UPF0297 protein SPCG_0205 (88 aa).

The protein belongs to the UPF0297 family.

The protein is UPF0297 protein SPCG_0205 of Streptococcus pneumoniae (strain CGSP14).